A 207-amino-acid polypeptide reads, in one-letter code: Guanylate kinase (207 aa).

The Guanylate kinase-like domain occupies 4–184 (GTLYIVSAPS…ALTDLKTIIR (181 aa)). 11–18 (APSGAGKS) is an ATP binding site.

This sequence belongs to the guanylate kinase family.

The protein resides in the cytoplasm. The catalysed reaction is GMP + ATP = GDP + ADP. Essential for recycling GMP and indirectly, cGMP. This Escherichia coli O6:K15:H31 (strain 536 / UPEC) protein is Guanylate kinase.